We begin with the raw amino-acid sequence, 949 residues long: Protein translocase subunit SecA (949 aa).

Residues Gln-87, 105–109 (GEGKT), and Asp-524 each bind ATP. Disordered regions lie at residues 852–876 (PPPGENGFSGGMQEISGPQGGSSGG) and 896–939 (LEFS…GSGK). Zn(2+)-binding residues include Cys-933, Cys-935, Cys-944, and His-945.

The protein belongs to the SecA family. As to quaternary structure, monomer and homodimer. Part of the essential Sec protein translocation apparatus which comprises SecA, SecYEG and auxiliary proteins SecDF-YajC and YidC. The cofactor is Zn(2+).

It localises to the cell inner membrane. Its subcellular location is the cytoplasm. The catalysed reaction is ATP + H2O + cellular proteinSide 1 = ADP + phosphate + cellular proteinSide 2.. Its function is as follows. Part of the Sec protein translocase complex. Interacts with the SecYEG preprotein conducting channel. Has a central role in coupling the hydrolysis of ATP to the transfer of proteins into and across the cell membrane, serving both as a receptor for the preprotein-SecB complex and as an ATP-driven molecular motor driving the stepwise translocation of polypeptide chains across the membrane. The sequence is that of Protein translocase subunit SecA from Methylocella silvestris (strain DSM 15510 / CIP 108128 / LMG 27833 / NCIMB 13906 / BL2).